Reading from the N-terminus, the 495-residue chain is MNSTPVLEMRNIAKAFGKFYALKGVDLTVYPSENHALMGENGAGKSTLMKVLAGAYTATSGEILIDGKPFHIRTQKDALSAGITLIYQEMQLAPNLSVAENISLGSELSHGGLVQRKEMLVQAQKVIDRLGAQFNASDKVMTLTIAEQQQVEIARALHRNSRILVMDEPTAALSSRETHRLFELIMRLRDEGMAIIYISHRMAEVYELSDRVSVLRDGQYVGSLTRDNLNAGELVRMMVGRPLSDLFNKERDIPLGKARLNVHHLTDGGKVQPSSLLVRSGKIVGLAGLVGAGRSELAQLIFGVRKATGGMIEVDGEPVVIHSPREAIDLGIGFLTENRKEQGLFLEMAAAENITMATLERDARWEAQTISDDAIKLLNIRVPHAQVRAGGLSGGNQQKMLISRWVAIGPRILLLDEPTRGVDVGAKSEIYRIMNEMARKGVAILMISSELPEIVGMSDRVYVMHEGSIAGELNGKNITQENIMTLATGVNDAHS.

ABC transporter domains are found at residues 7 to 242 (LEMR…VGRP) and 250 to 491 (ERDI…TGVN). Residue 39 to 46 (GENGAGKS) coordinates ATP.

This sequence belongs to the ABC transporter superfamily. Ribose importer (TC 3.A.1.2.1) family. As to quaternary structure, the complex is composed of an ATP-binding protein (RbsA), two transmembrane proteins (RbsC) and a solute-binding protein (RbsB).

The protein localises to the cell inner membrane. It catalyses the reaction D-ribose(out) + ATP + H2O = D-ribose(in) + ADP + phosphate + H(+). In terms of biological role, part of the ABC transporter complex RbsABC involved in ribose import. Responsible for energy coupling to the transport system. This chain is Ribose import ATP-binding protein RbsA, found in Shigella dysenteriae serotype 1 (strain Sd197).